Reading from the N-terminus, the 382-residue chain is Caspase-1-B (382 aa).

Residues 1 to 98 constitute a propeptide that is removed on maturation; the sequence is MTAQLNKVRK…HEHAPSPIQE (98 aa). Catalysis depends on residues His216 and Cys270. A propeptide spanning residues 283–292 is cleaved from the precursor; sequence DVAPAPLEDD.

This sequence belongs to the peptidase C14A family. In terms of assembly, heterotetramer that consists of two anti-parallel arranged heterodimers, each one formed by a 20 kDa (Caspase-1 subunit p20) and a 10 kDa (Caspase-1 subunit p10) subunit. Heterotetramer that consists of two anti-parallel arranged heterodimers, each one formed by a 20 kDa (Caspase-1 subunit p20) and a 10 kDa (Caspase-1 subunit p10) subunit. Can form a heterodimer with isoform epsilon which then has an inhibitory effect. The two subunits are derived from the precursor sequence by an autocatalytic mechanism.

It is found in the cytoplasm. Its subcellular location is the cell membrane. The catalysed reaction is Strict requirement for an Asp residue at position P1 and has a preferred cleavage sequence of Tyr-Val-Ala-Asp-|-.. In terms of biological role, thiol protease involved in a variety of inflammatory processes by proteolytically cleaving other proteins, such as the precursors of the inflammatory cytokines interleukin-1 beta (IL1B) and interleukin 18 (IL18) as well as the pyroptosis inducer Gasdermin-D (GSDMD), into active mature peptides. Plays a key role in cell immunity as an inflammatory response initiator: once activated through formation of an inflammasome complex, it initiates a pro-inflammatory response through the cleavage of the two inflammatory cytokines IL1B and IL18, releasing the mature cytokines which are involved in a variety of inflammatory processes. Cleaves a tetrapeptide after an Asp residue at position P1. Also initiates pyroptosis, a programmed lytic cell death pathway, through cleavage of GSDMD. The protein is Caspase-1-B (casp1-b) of Xenopus laevis (African clawed frog).